The following is a 191-amino-acid chain: Protein adenylyltransferase NmFic (191 aa).

A Fido domain is found at 37 to 162 (GTTAGLQQIH…NDLELRFLLK (126 aa)). Residues Lys-67, 104–107 (NIAH), 112–118 (GNGRSTR), and 140–143 (KTLY) each bind ATP. The Inhibitory (S/T)XXXE(G/N) motif signature appears at 182–187 (SYYYEG). Tyr-183 is modified (O-AMP-tyrosine; in vitro). Glu-186 contributes to the ATP binding site.

Homodimer. Auto-AMPylation at Tyr-183 in vitro.

The enzyme catalyses L-tyrosyl-[protein] + ATP = O-(5'-adenylyl)-L-tyrosyl-[protein] + diphosphate. The catalysed reaction is L-threonyl-[protein] + ATP = 3-O-(5'-adenylyl)-L-threonyl-[protein] + diphosphate. Adenylyltransferase activity is inhibited by the inhibitory helix present at the C-terminus: Glu-186 binds ATP and competes with ATP-binding at Arg-118, thereby preventing adenylyltransferase activity. Activation dissociates ATP-binding from Glu-186, allowing ordered binding of the entire ATP moiety with the alpha-phosphate in an orientation that is productive for accepting an incoming target hydroxyl side chain. Its function is as follows. Adenylyltransferase that mediates the addition of adenosine 5'-monophosphate (AMP) to specific residues of target proteins. This is Protein adenylyltransferase NmFic from Neisseria meningitidis serogroup B (strain ATCC BAA-335 / MC58).